A 316-amino-acid chain; its full sequence is Probable cell division protein WhiA (316 aa).

A DNA-binding region (H-T-H motif) is located at residues 275–309 (TLKELGEMVSGGKISKSGINHRLRKIDEIAEKLRA).

Belongs to the WhiA family.

Its function is as follows. Involved in cell division and chromosome segregation. In Bacillus cereus (strain G9842), this protein is Probable cell division protein WhiA.